A 311-amino-acid chain; its full sequence is Heparan sulfate glucosamine 3-O-sulfotransferase 1 (311 aa).

The N-terminal stretch at M1–S20 is a signal peptide. N52 is a glycosylation site (N-linked (GlcNAc...) asparagine). 3'-phosphoadenylyl sulfate is bound by residues K68 to R72, R151, and S159. N-linked (GlcNAc...) asparagine glycans are attached at residues N196, N246, and N253. Position 259 (Y259) interacts with 3'-phosphoadenylyl sulfate. C260 and C269 are disulfide-bonded. Residue K274–H278 participates in 3'-phosphoadenylyl sulfate binding.

The protein belongs to the sulfotransferase 1 family.

The protein resides in the golgi apparatus lumen. The catalysed reaction is alpha-D-glucosaminyl-[heparan sulfate](n) + 3'-phosphoadenylyl sulfate = 3-sulfo-alpha-D-glucosaminyl-[heparan sulfate](n) + adenosine 3',5'-bisphosphate + H(+). Functionally, sulfotransferase that utilizes 3'-phospho-5'-adenylyl sulfate (PAPS) to catalyze the transfer of a sulfo group to position 3 of glucosamine residues in heparan. Catalyzes the rate limiting step in the biosynthesis of heparan sulfate (HSact). This modification is a crucial step in the biosynthesis of anticoagulant heparan sulfate as it completes the structure of the antithrombin pentasaccharide binding site. This Rattus norvegicus (Rat) protein is Heparan sulfate glucosamine 3-O-sulfotransferase 1 (Hs3st1).